A 419-amino-acid chain; its full sequence is MNIIEIIELKKNKKKLSQDQINFCISGLVNKSIPDYQISALLMAIWFNGLDDNELYFLTKAMIDSGKIYKFHPEYKKILIDKHSTGGIGDKVSIALRPILVSFDLGVAKLSGRGLGFTGGTIDKLESINVNTDIDLKNSKKILNIANMFIVGQTNDIVPADKLLYALRDVTGTVDSLPLIAASILSKKFALESDYIFIDIKYGQGAFCHDIETAKKISNIMKNLAKKFKRKVYFVLSDMNEVLGNTVGNAIEVKEAIDFLKNNSDVGTYFKKLMFDLVTLILLKTKKCKTKKEAKEKINYVLENKIAFNNFCNWIELQNGNIAKIKNDTFFKPKYWTNIAAWKSGKISYKSIIELAEIGVDLGSGRRKKEDKIDFQAGIYLHAKSNEKIKIKDKILTLYSSKPIKQDLIDKAKKIIKIS.

The protein belongs to the thymidine/pyrimidine-nucleoside phosphorylase family. In terms of assembly, homodimer.

It catalyses the reaction thymidine + phosphate = 2-deoxy-alpha-D-ribose 1-phosphate + thymine. In terms of biological role, the enzymes which catalyze the reversible phosphorolysis of pyrimidine nucleosides are involved in the degradation of these compounds and in their utilization as carbon and energy sources, or in the rescue of pyrimidine bases for nucleotide synthesis. The chain is Thymidine phosphorylase (deoA) from Mycoplasmoides pirum (Mycoplasma pirum).